We begin with the raw amino-acid sequence, 289 residues long: Mas-related G-protein coupled receptor member G (289 aa).

Over 1-13 (MFGLFGLWRTFDS) the chain is Extracellular. A helical membrane pass occupies residues 14–34 (VVFYLTLIVGLGGPVGNGLVL). The Cytoplasmic segment spans residues 35-42 (WNLGFRIK). Residues 43-63 (KGPFSIYLLHLAAADFLFLSC) traverse the membrane as a helical segment. Residues 64-78 (RVGFSVAQAALGAQD) lie on the Extracellular side of the membrane. A helical membrane pass occupies residues 79-99 (TLYFVLTFLWFAVGLWLLAAF). Residues 100–120 (SVERCLSDLFPACYQGCRPRH) lie on the Cytoplasmic side of the membrane. The chain crosses the membrane as a helical span at residues 121–141 (ASAVLCALVWTPTLPAVPLPA). The Extracellular segment spans residues 142 to 163 (NACGLLRNSACPLVCPRYHVAS). A helical transmembrane segment spans residues 164–184 (VTWFLVLARVAWTAGVVLFVW). Over 185–195 (VTCCSTRPRPR) the chain is Cytoplasmic. A helical membrane pass occupies residues 196–216 (LYGIVLGALLLLFFCGLPSVF). Residues 217–221 (YWSLQ) lie on the Extracellular side of the membrane. The chain crosses the membrane as a helical span at residues 222–242 (PLLNFLLPVFSPLATLLACVN). The Cytoplasmic portion of the chain corresponds to 243-289 (SSSKPLIYSGLGRQPGKREPLRSVLRRALGEGAELGARGQSLPMGLL).

The protein belongs to the G-protein coupled receptor 1 family. Mas subfamily.

Its subcellular location is the cell membrane. Its function is as follows. Orphan receptor. May regulate nociceptor function and/or development, including the sensation or modulation of pain. This Homo sapiens (Human) protein is Mas-related G-protein coupled receptor member G (MRGPRG).